Reading from the N-terminus, the 235-residue chain is Protein FEV (235 aa).

Residues 58 to 138 (IQLWQFLLEL…HGKRYAYKFD (81 aa)) constitute a DNA-binding region (ETS).

This sequence belongs to the ETS family. Expressed by serotonergic neurons in anterior and posterior raphe.

It localises to the nucleus. In terms of biological role, functions as a transcriptional regulator. Functions in the differentiation and the maintenance of the central serotonergic neurons. May play a role in cell growth. The chain is Protein FEV (fev) from Danio rerio (Zebrafish).